The sequence spans 201 residues: tRNA (guanine-N(7)-)-methyltransferase (201 aa).

S-adenosyl-L-methionine-binding residues include glutamate 33, glutamate 58, aspartate 85, and aspartate 106. Aspartate 106 is a catalytic residue. Substrate contacts are provided by residues lysine 110, aspartate 142, and 180 to 183 (TTYE).

It belongs to the class I-like SAM-binding methyltransferase superfamily. TrmB family.

It carries out the reaction guanosine(46) in tRNA + S-adenosyl-L-methionine = N(7)-methylguanosine(46) in tRNA + S-adenosyl-L-homocysteine. It functions in the pathway tRNA modification; N(7)-methylguanine-tRNA biosynthesis. Catalyzes the formation of N(7)-methylguanine at position 46 (m7G46) in tRNA. The chain is tRNA (guanine-N(7)-)-methyltransferase from Mesomycoplasma hyopneumoniae (strain J / ATCC 25934 / NCTC 10110) (Mycoplasma hyopneumoniae).